The primary structure comprises 1245 residues: TAL effector protein Brg11 (1245 aa).

Disordered regions lie at residues 1-87 and 173-205; these read MRIG…LVPE and CPQA…PTFL. The segment covering 67–87 has biased composition (pro residues); the sequence is PRRPLPVAPASAPPAPSLVPE. Positions 185 to 191 match the Nuclear localization signal 1 motif; the sequence is RSARARR. Residues 286-320 form a Cryptic repeat -1 repeat; that stretch reads LTRAHIVDIARQRSGDLALQALLPVATALTAAPLR. One copy of the Cryptic repeat 0 repeat lies at 321-354; that stretch reads LSASQIATVAQYGERPAIQALYRLRRKLTRAPLH. Core repeat repeat units lie at residues 355–389, 390–424, 425–459, 460–494, 495–529, 530–564, 565–599, 600–634, 635–669, 670–704, 705–739, 740–774, 775–809, 810–844, 845–879, and 880–914; these read LTPQ…APYR, LSTE…APYV, LDTE…APYA, LSTE…APYA, LSTE…VPYA, LSTA…APYG, LSTA…APYA, LNTE…APYA, LSTE…APYG, LSTA…TPYD, and LNTA…APYA. One copy of the Cryptic repeat +1 repeat lies at 915–948; sequence LSTAQVVAIACISGQQALEAIEAHMPTLRQASHS. Residues 949–982 form a Cryptic repeat +2 repeat; sequence LSPERVAAIACIGGRSAVEAVRQGLPVKAIRRIR. 3 short sequence motifs (nuclear localization signal) span residues 980–983, 1108–1111, and 1145–1148; these read RIRR, HRKR, and RRKR. Residues 1096-1138 are disordered; that stretch reads SPGMAGQSACSPHRKRPAETAIAPRSIRRSPNNAGQPSEPWPD. The tract at residues 1237–1245 is activation domain; it reads DWLLQILET.

The protein belongs to the transcription activator-like effector (TALE) family. RipTAL/RTL subfamily.

It is found in the secreted. It localises to the host nucleus. Functionally, exported into plant cells, where it is targeted to the nucleus and probably acts as a transcription factor. Binds DNA in a sequence-specific manner. May contribute to plant pathogenicity. The protein is TAL effector protein Brg11 of Ralstonia nicotianae (strain ATCC BAA-1114 / GMI1000) (Ralstonia solanacearum).